Consider the following 527-residue polypeptide: Cytokinin dehydrogenase 6 (527 aa).

The first 22 residues, 1–22 (MAARCSIAFMVMASCLSVVVSG), serve as a signal peptide directing secretion. The FAD-binding PCMH-type domain maps to 55–236 (VAAAPEAVLH…TRARIGLEPA (182 aa)). Gly91 and Gly93 together coordinate FAD. His94 is subject to Pros-8alpha-FAD histidine. FAD is bound by residues Ser95 and Gln99. Asn121 carries an N-linked (GlcNAc...) asparagine glycan. The FAD site is built by Asp160, Thr165, Ser171, Ile175, and Ile226. Residues Asn280 and Asn323 are each glycosylated (N-linked (GlcNAc...) asparagine). Residues Tyr475, Ser510, and Gln513 each coordinate FAD.

The protein belongs to the oxygen-dependent FAD-linked oxidoreductase family. Monomer. It depends on FAD as a cofactor.

The protein resides in the secreted. The protein localises to the extracellular space. The enzyme catalyses N(6)-dimethylallyladenine + A + H2O = 3-methyl-2-butenal + adenine + AH2. In terms of biological role, catalyzes the oxidation of cytokinins, a family of N(6)-substituted adenine derivatives that are plant hormones, where the substituent is an isopentenyl group. This chain is Cytokinin dehydrogenase 6 (CKX6), found in Oryza sativa subsp. japonica (Rice).